A 309-amino-acid polypeptide reads, in one-letter code: DDRGK domain-containing protein 1 (309 aa).

The Lumenal portion of the chain corresponds to 1-2; that stretch reads MD. Residues 3–23 form a helical membrane-spanning segment; sequence LIILVGIASALLVVILTIFFL. The Cytoplasmic portion of the chain corresponds to 24 to 309; it reads QKKKGGTEAK…VSAGAGEGSS (286 aa). The segment at 30-178 is disordered; that stretch reads TEAKEAAAPP…RLVKEERERK (149 aa). Positions 53–84 are enriched in low complexity; that stretch reads RRAQIARNQRNRLRQNAPAAAPAAAAALQAAD. A compositionally biased stretch (acidic residues) spans 85–95; it reads AEGDNDDENPD. The span at 107-178 shows a compositional bias: basic and acidic residues; the sequence is LDEKMGAKKR…RLVKEERERK (72 aa).

The protein belongs to the DDRGK1 family. Interacts with Atg9; the interaction is transient.

It is found in the endoplasmic reticulum membrane. In terms of biological role, substrate adapter for ufmylation, the covalent attachment of the ubiquitin-like modifier UFM1 to substrate proteins. Required for ufmylation of Atg9; protects the nervous system during aging, possibly by stabilizing Atg9 and supporting its function. This chain is DDRGK domain-containing protein 1, found in Drosophila persimilis (Fruit fly).